Here is a 675-residue protein sequence, read N- to C-terminus: INO80 complex subunit D (675 aa).

5 disordered regions span residues 1–39 (MNNN…NVNQ), 183–203 (TGNN…NSTP), 274–324 (LKQK…ERQV), 473–523 (DSNK…KLNK), and 627–675 (VPVT…TMIS). 3 stretches are compositionally biased toward low complexity: residues 282–318 (QQLQ…QLQI), 482–519 (NNDN…NNNN), and 634–648 (NQNN…TNNS). Residues 664–675 (EILKDSDNTMIS) show a composition bias toward basic and acidic residues.

Belongs to the INO80D family. As to quaternary structure, component of the chromatin-remodeling INO80 complex.

Its subcellular location is the nucleus. Its function is as follows. Putative regulatory component of the chromatin remodeling INO80 complex which is involved in transcriptional regulation, DNA replication and probably DNA repair. This chain is INO80 complex subunit D, found in Dictyostelium discoideum (Social amoeba).